We begin with the raw amino-acid sequence, 266 residues long: Carboxy-S-adenosyl-L-methionine synthase (266 aa).

The disordered stretch occupies residues 1 to 24 (MPKRETQSLHDTQQQPGPTAPQRD). S-adenosyl-L-methionine is bound by residues Tyr58, 83–85 (GCS), 108–109 (DN), 136–137 (DI), Asn151, and Arg218.

It belongs to the class I-like SAM-binding methyltransferase superfamily. Cx-SAM synthase family. As to quaternary structure, homodimer.

It carries out the reaction prephenate + S-adenosyl-L-methionine = carboxy-S-adenosyl-L-methionine + 3-phenylpyruvate + H2O. Its function is as follows. Catalyzes the conversion of S-adenosyl-L-methionine (SAM) to carboxy-S-adenosyl-L-methionine (Cx-SAM). The chain is Carboxy-S-adenosyl-L-methionine synthase from Yersinia enterocolitica serotype O:8 / biotype 1B (strain NCTC 13174 / 8081).